The sequence spans 293 residues: Energy-coupling factor transporter ATP-binding protein EcfA2 (293 aa).

Residues 3–246 (ITFQKVEHRY…ADELEKIGVD (244 aa)) form the ABC transporter domain. Position 40–47 (40–47 (GHTGSGKS)) interacts with ATP.

The protein belongs to the ABC transporter superfamily. Energy-coupling factor EcfA family. Forms a stable energy-coupling factor (ECF) transporter complex composed of 2 membrane-embedded substrate-binding proteins (S component), 2 ATP-binding proteins (A component) and 2 transmembrane proteins (T component).

It is found in the cell membrane. ATP-binding (A) component of a common energy-coupling factor (ECF) ABC-transporter complex. Unlike classic ABC transporters this ECF transporter provides the energy necessary to transport a number of different substrates. This chain is Energy-coupling factor transporter ATP-binding protein EcfA2, found in Bacillus anthracis.